Consider the following 566-residue polypeptide: Mitochondrial distribution and morphology protein 34 (566 aa).

The 195-residue stretch at 1 to 195 folds into the SMP-LTD domain; the sequence is MAFNFNWSPL…LPAIIHRLSL (195 aa). 4 disordered regions span residues 212–237, 349–401, 432–518, and 539–566; these read PEQT…DSLG, GYGL…NPSV, PERR…SSST, and KLMP…AYGQ. A compositionally biased stretch (basic residues) spans 358–370; that stretch reads RHSKAHSRKRKKR. A compositionally biased stretch (polar residues) spans 380 to 401; the sequence is TSDTASVSDESAYTETASNPSV. Over residues 444 to 454 the composition is skewed to basic and acidic residues; sequence PRRDIATEMLR.

This sequence belongs to the MDM34 family. Component of the ER-mitochondria encounter structure (ERMES) or MDM complex, composed of mmm1, mdm10, mdm12 and mdm34.

It is found in the mitochondrion outer membrane. In terms of biological role, component of the ERMES/MDM complex, which serves as a molecular tether to connect the endoplasmic reticulum (ER) and mitochondria. Components of this complex are involved in the control of mitochondrial shape and protein biogenesis, and function in nonvesicular lipid trafficking between the ER and mitochondria. Mdm34 is required for the interaction of the ER-resident membrane protein mmm1 and the outer mitochondrial membrane-resident beta-barrel protein mdm10. This Aspergillus flavus (strain ATCC 200026 / FGSC A1120 / IAM 13836 / NRRL 3357 / JCM 12722 / SRRC 167) protein is Mitochondrial distribution and morphology protein 34.